A 672-amino-acid polypeptide reads, in one-letter code: MKDLLSSLSKGIPFEPLPEHPGLDSTVPHAPGRPINLTLNEKKLAIKNSLRYFPNSLHSILANEFLEELNKYGHIYMYRFRPTHYEMKAYPIEEYPAKSRQAASIMLMIMNNLDREVAQFPNELVTYGGNGSVFQNWAQYHLTMKYLSEMTDQQTLTMYSGHPMGLFPSNESSPRVIVTNGMVIPNYSSHKDYERMYAQGVTQYGQMTAGSYCYIGPQGIVHGTTITLLNAGRKYLGVESLIGKVFVSSGLGGMSGAQTKAAYICGAICIVAEVSPAAVKKRHAQNWVMEVYSDLNELFARGSCSKEKKPLSIAYQGNVVTLWEKLVEEKDITVDLGSDQTSLHNPFNGGYYPVQCSFEESNRLMVQEPTKFKEMVQETLRRHTTAINALSARGMKFWDYGNSFLLEASRAKADIIKPGTDGKEFIYPSYVQDIMGDIFSLGFGPFRWVCTSGNPKDLEITDRIAKELIEKLRSQPGVPKNVQQQFNDNHLWISQAGEHKLVVGSQARILYSDCIGRSELAVAFNKAVADGTLSAPVVISRDHHDVSGTDAPWRETSNIKDGSQFCADMAIHNVIGDSFRGATWVAIHNGGGTGFGEAINGGFGLYLCGSKLQEEKARMMLNWDVNNGIARRSWSYNDNAENTIKRAMELDPSLKVTIPNHTSDDLINSLNF.

NAD(+) is bound by residues 128-129 (GG), Gln-206, 253-255 (GMS), Glu-273, 318-319 (NV), 340-344 (QTSLH), 351-352 (YY), Tyr-400, and Gly-592.

The protein belongs to the urocanase family. NAD(+) serves as cofactor.

The catalysed reaction is 4-imidazolone-5-propanoate = trans-urocanate + H2O. Its pathway is amino-acid degradation; L-histidine degradation into L-glutamate; N-formimidoyl-L-glutamate from L-histidine: step 2/3. In Dictyostelium discoideum (Social amoeba), this protein is Probable urocanate hydratase (uroc1).